The following is a 1056-amino-acid chain: Kinesin-like protein KIN-5A (1056 aa).

The segment at 1–44 (MDRRIGLTSPSPKSTEKSGRDLRSGGDANGGANTNSNSIPRGDK) is disordered. Residues 14 to 24 (STEKSGRDLRS) show a composition bias toward basic and acidic residues. The Kinesin motor domain occupies 49–395 (NVQVILRCRP…LDYAHRAKNI (347 aa)). Position 135–142 (135–142 (GQTGTGKT)) interacts with ATP. Residues 443–525 (QEEAEKKAMT…STIKEKEYVI (83 aa)) adopt a coiled-coil conformation.

Belongs to the TRAFAC class myosin-kinesin ATPase superfamily. Kinesin family. KIN-5/BimC subfamily.

The protein localises to the cytoplasm. The protein resides in the cytoskeleton. Its subcellular location is the spindle. In terms of biological role, responsible for microtubule translocation. May be important for the organization of phragmoplast-specific arrays of microtubules. Plays an essential role in stabilizing the mitotic spindle. Required during mitotic cytokinesis. This is Kinesin-like protein KIN-5A from Oryza sativa subsp. japonica (Rice).